A 289-amino-acid chain; its full sequence is Probable ABC transporter permease protein BruAb2_0483 (289 aa).

Transmembrane regions (helical) follow at residues phenylalanine 9–leucine 29, valine 70–leucine 90, valine 99–tryptophan 119, isoleucine 144–valine 166, isoleucine 213–threonine 233, and phenylalanine 258–isoleucine 278. An ABC transmembrane type-1 domain is found at leucine 65 to tyrosine 279.

The protein belongs to the binding-protein-dependent transport system permease family. The complex is composed of two ATP-binding proteins (BruAb2_0487), two transmembrane proteins (BruAb2_0483) and a solute-binding protein (BruAb2_0484).

It is found in the cell inner membrane. Probably part of an ABC transporter complex. Probably responsible for the translocation of the substrate across the membrane. The chain is Probable ABC transporter permease protein BruAb2_0483 from Brucella abortus biovar 1 (strain 9-941).